Here is a 760-residue protein sequence, read N- to C-terminus: Catalase-peroxidase (760 aa).

A disordered region spans residues 1–24; sequence MAESKCPFKSQGSRSNVAGGGTRN. The tryptophyl-tyrosyl-methioninium (Trp-Tyr) (with M-268) cross-link spans 96–242; it reads WHSAGTYRVF…LAAAHMGLIY (147 aa). Residue His-97 is the Proton acceptor of the active site. Positions 242-268 form a cross-link, tryptophyl-tyrosyl-methioninium (Tyr-Met) (with W-96); sequence YVNPEGPDGNPDPVAAAHDIRVTFGRM. His-283 provides a ligand contact to heme b.

This sequence belongs to the peroxidase family. Peroxidase/catalase subfamily. In terms of assembly, homodimer or homotetramer. Heme b serves as cofactor. In terms of processing, formation of the three residue Trp-Tyr-Met cross-link is important for the catalase, but not the peroxidase activity of the enzyme.

The protein localises to the cytoplasm. It catalyses the reaction H2O2 + AH2 = A + 2 H2O. The enzyme catalyses 2 H2O2 = O2 + 2 H2O. Its function is as follows. Bifunctional enzyme with both catalase and broad-spectrum peroxidase activity. The sequence is that of Catalase-peroxidase from Aspergillus clavatus (strain ATCC 1007 / CBS 513.65 / DSM 816 / NCTC 3887 / NRRL 1 / QM 1276 / 107).